The chain runs to 339 residues: 4-amino-5-hydroxymethyl-2-methylpyrimidine phosphate synthase (339 aa).

Lysine 62 is modified (N6-(pyridoxal phosphate)lysine). Residue histidine 66 is part of the active site. 115-118 (GEFG) is a binding site for pyridoxal 5'-phosphate. Positions 195-199 (CCCFC) match the CCCFC; essential for catalytic activity, may be the site of iron coordination motif.

Belongs to the NMT1/THI5 family. In terms of assembly, homodimer. It depends on Fe(3+) as a cofactor.

The catalysed reaction is N(6)-(pyridoxal phosphate)-L-lysyl-[4-amino-5-hydroxymethyl-2-methylpyrimidine phosphate synthase] + L-histidyl-[4-amino-5-hydroxymethyl-2-methylpyrimidine phosphate synthase] + 2 Fe(3+) + 4 H2O = L-lysyl-[4-amino-5-hydroxymethyl-2-methylpyrimidine phosphate synthase] + (2S)-2-amino-5-hydroxy-4-oxopentanoyl-[4-amino-5-hydroxymethyl-2-methylpyrimidine phosphate synthase] + 4-amino-2-methyl-5-(phosphooxymethyl)pyrimidine + 3-oxopropanoate + 2 Fe(2+) + 2 H(+). Its pathway is cofactor biosynthesis; thiamine diphosphate biosynthesis. In terms of biological role, responsible for the formation of the pyrimidine heterocycle in the thiamine biosynthesis pathway. Catalyzes the formation of hydroxymethylpyrimidine phosphate (HMP-P) from histidine and pyridoxal phosphate (PLP). The protein uses PLP and the active site histidine to form HMP-P, generating an inactive enzyme. The enzyme can only undergo a single turnover, which suggests it is a suicide enzyme. The protein is 4-amino-5-hydroxymethyl-2-methylpyrimidine phosphate synthase of Candida albicans (strain WO-1) (Yeast).